The sequence spans 51 residues: Insulin (51 aa).

Cystine bridges form between C7/C37, C19/C50, and C36/C41.

Belongs to the insulin family. As to quaternary structure, heterodimer of a B chain and an A chain linked by two disulfide bonds.

The protein resides in the secreted. Insulin decreases blood glucose concentration. It increases cell permeability to monosaccharides, amino acids and fatty acids. It accelerates glycolysis, the pentose phosphate cycle, and glycogen synthesis in liver. The sequence is that of Insulin (INS) from Balaenoptera borealis (Sei whale).